A 785-amino-acid chain; its full sequence is MDAAIRGNDVIFVLKTIGVPSACRQNEDPRFVEAFKCDELERYIDNNPECTLFESLRDEEAYSIVRIFMDVDLDACLDEIDYLTAIQDFIIEVSNCVARFAFTECGAIHENVIKSMRSNFSLTKSTNRDKTSFHIIFLDTYTTMDTLIAMKRTLLELSRSSENPLTRSIDTAVYRRKTTLRVVGTRKNPNCDTIHVMQPPHDNIEDYLFTYVDMNNNSYYFSLQRRLEDLVPDKLWEPGFISFEDAIKRVSKIFINSIINFNDLDENNFTTVPLVIDYVTPCALCKKRSHKHPHQLSLENGAIRIYKTGNPHSCKVKIVPLDGNKLFNIAQRILDTNSVLLTERGDHIVWINNSWKFNSEEPLITKLILSIRHQLPKEYSSELLCPRKRKTVEANIRDMLVDSVETDTYPDKLPFKNGVLDLVDGMFYSGDDAKKYTCTVSTGFKFDDTKFVEDSPEMEELMNIINDIQPLTDENKKNRELYEKTLSSCLCGATKGCLTFFFGETATGKSTTKRLLKSAIGDLFVETGQTILTDVLDKGPNPFIANMHLKRSVFCSELPDFACSGSKKIRSDNIKKLTEPCVIGRPCFSNKINNRNHATIIIDTNYKPVFDRIDNALMRRIAVVRFRTHFSQPSGREAAENNDAYDKVKLLDEGLDGKIQNNRYRFAFLYLLVKWYKKYHIPIMKLYPTPEEIPDFAFYLKIGTLLVSSSVKHIPLMTDLSKKGYILYDNVVTLPLTTFQQKISKYFNSRLFGHDIESFINRHKKFANVSDEYLQYIFIEDISSP.

This sequence belongs to the orthopoxvirus OPG117 family. Homomultimer; hexamer. Interacts with OPG148.

Its subcellular location is the host cytoplasm. Its function is as follows. Multifunctional protein required for genome uncoating and replication. Major viral uncoating protein that is required for the release of the viral genome from incoming viral cores containing the viral DNA genome. Possesses an ATPase activity that is required for hexamerization and uncoating. This chain is Uncoating factor OPG117 (OPG117), found in Cynomys gunnisoni (Gunnison's prairie dog).